The sequence spans 394 residues: Flagellin B (394 aa).

The protein belongs to the bacterial flagellin family.

The protein resides in the secreted. Its subcellular location is the bacterial flagellum. Functionally, flagellin is the subunit protein which polymerizes to form the filaments of bacterial flagella. In Rhizobium meliloti (strain 1021) (Ensifer meliloti), this protein is Flagellin B (flaB).